The sequence spans 747 residues: Pentatricopeptide repeat-containing protein At5g39710 (747 aa).

15 PPR repeats span residues 133–167, 168–203, 204–238, 239–273, 274–308, 309–343, 344–378, 379–413, 414–448, 449–483, 484–518, 519–553, 554–588, 604–638, and 639–673; these read TSSV…GFMP, GVLS…QVSP, NVFT…GCLP, NVVT…GLEP, NLIS…GYSL, DEVT…GLTP, SVIT…GLCP, NERT…GFSP, SVVT…GLSP, DVVS…GIKP, DTIT…GLPP, DEFT…GVLP, DVVT…ESVP, EFKS…NHKP, and DGTA…GFLL.

Belongs to the PPR family. P subfamily.

The polypeptide is Pentatricopeptide repeat-containing protein At5g39710 (EMB2745) (Arabidopsis thaliana (Mouse-ear cress)).